The chain runs to 252 residues: 5-oxoprolinase subunit A (252 aa).

Belongs to the LamB/PxpA family. As to quaternary structure, forms a complex composed of PxpA, PxpB and PxpC.

It carries out the reaction 5-oxo-L-proline + ATP + 2 H2O = L-glutamate + ADP + phosphate + H(+). Its function is as follows. Catalyzes the cleavage of 5-oxoproline to form L-glutamate coupled to the hydrolysis of ATP to ADP and inorganic phosphate. The polypeptide is 5-oxoprolinase subunit A (Mycobacterium leprae (strain Br4923)).